The chain runs to 312 residues: Putative S-adenosyl-L-methionine-dependent methyltransferase Mkms_0097 (312 aa).

S-adenosyl-L-methionine contacts are provided by residues Asp-134 and 163-164; that span reads DL.

Belongs to the UPF0677 family.

Its function is as follows. Exhibits S-adenosyl-L-methionine-dependent methyltransferase activity. The chain is Putative S-adenosyl-L-methionine-dependent methyltransferase Mkms_0097 from Mycobacterium sp. (strain KMS).